The chain runs to 830 residues: MVLRYNSPRLNILELVLLYVGFFSIGSLNLLQKRKATSDPYRRKNRFGKEPIGIISWWILGIALTYVVDISNLVIYALRVPNWWPCKTTVVCLILFLLFWIIVLISCADSKALPKNADSILKAYRLSVLYVWAIDIVFETIFIVYSPHPNETFQGIVLADHVARLVLCVFATAIYLTYRRKRHTHDPLDFEERQLTEESNVNENAISQNPSTVQLGVSASTSNFGTLKSTSKKPSDKSWAEYFRSFSTLLPYLWPTKDYRLQFQIFICIVLLFLGRAVNILAPRQLGVLTEKLTKHSEKIPWSDVILFVIYRFLQGNMGVIGSLRSFLWVPVSQYAYRAISTKALRHVLNLSYDFHLNKRAGEVLTALTKGSSLNTFAEQVVFQIGPVLLDLGVAMVYFFIKFDIYFTLIVLIMTLCYCYVTVKITSWRTEARRKMVNSWRESYAVQNDAIMNFETVKNFDADDFENERYGHAVDIYLKQERKVLFSLNFLNIVQGGIFTFSLAIACLLSAYRVTFGFNTVGDFVILLTYMIQLQQPLNFFGTLYRSLQNSIIDTERLLEIFEEKPTVVEKPNAPDLKVTQGKVIFSHVSFAYDPRKPVLSDINFVAQPGKVIALVGESGGGKSTIMRILLRFFDVNSGSITIDDQDIRNVTLSSLRSSIGVVPQDSTLFNDTILYNIKYAKPSATNEEIYAAAKAAQIHDRILQFPDGYNSRVGERGLKLSGGEKQRVAVARAILKDPSIILLDEATSALDTNTERQIQAALNRLASGRTAIVIAHRLSTITNADLILCISNGRIVETGTHEELIKRDGGAYKKMWFQQAMGKTSAETH.

An N-terminal signal peptide occupies residues 1–27 (MVLRYNSPRLNILELVLLYVGFFSIGS). The next 3 helical transmembrane spans lie at 51–71 (PIGI…VDIS), 88–108 (TTVV…ISCA), and 126–146 (LSVL…IVYS). N-linked (GlcNAc...) asparagine glycosylation occurs at Asn150. 3 helical membrane-spanning segments follow: residues 156 to 176 (IVLA…AIYL), 263 to 283 (FQIF…ILAP), and 304 to 324 (DVIL…IGSL). The ABC transmembrane type-1 domain occupies 265–550 (IFICIVLLFL…FGTLYRSLQN (286 aa)). An N-linked (GlcNAc...) asparagine glycan is attached at Asn350. Transmembrane regions (helical) follow at residues 381–401 (VVFQ…YFFI) and 403–423 (FDIY…YVTV). Residues 429 to 433 (RTEAR), 492 to 495 (NIVQ), and Gly542 each bind glutathione. The helical transmembrane segment at 490–511 (FLNIVQGGIFTFSLAIACLLSA) threads the bilayer. Residues 584–818 (VIFSHVSFAY…DGGAYKKMWF (235 aa)) enclose the ABC transporter domain. ATP is bound by residues Tyr593 and 617–628 (GESGGGKSTIMR).

The protein belongs to the ABC transporter superfamily. ABCB family. Heavy Metal importer (TC 3.A.1.210) subfamily.

Its subcellular location is the vacuole membrane. Functionally, involved in metal tolerance. Probably involved in the transport of metal-bound phytochelatins. Compartmentalizes cadmium within vacuoles, thereby protecting cells from cadmium toxicity. This Schizosaccharomyces pombe (strain 972 / ATCC 24843) (Fission yeast) protein is Heavy metal tolerance protein (hmt1).